Here is a 160-residue protein sequence, read N- to C-terminus: Phosphopantetheine adenylyltransferase (160 aa).

Residue Ser-9 coordinates substrate. ATP is bound by residues 9–10 (SF) and His-17. Substrate-binding residues include Lys-41, Val-73, and Lys-87. ATP is bound by residues 88-90 (GLR), Glu-98, and 122-128 (YSFVSSS).

Belongs to the bacterial CoaD family. As to quaternary structure, homohexamer. Mg(2+) is required as a cofactor.

It is found in the cytoplasm. It catalyses the reaction (R)-4'-phosphopantetheine + ATP + H(+) = 3'-dephospho-CoA + diphosphate. Its pathway is cofactor biosynthesis; coenzyme A biosynthesis; CoA from (R)-pantothenate: step 4/5. In terms of biological role, reversibly transfers an adenylyl group from ATP to 4'-phosphopantetheine, yielding dephospho-CoA (dPCoA) and pyrophosphate. The chain is Phosphopantetheine adenylyltransferase from Mycobacterium leprae (strain TN).